Consider the following 1669-residue polypeptide: Dystrophin, isoform B (1669 aa).

Positions 1–11 are enriched in pro residues; the sequence is MTAKPPPPIPP. 5 disordered regions span residues 1–28, 43–243, 327–356, 389–417, and 481–508; these read MTAK…LAPE, RGQQ…SEDA, RAQA…RSTI, GGGG…MPLS, and SGAL…NSSG. A compositionally biased stretch (polar residues) spans 53–62; the sequence is SQEQHATNTL. Over residues 118 to 131 the composition is skewed to pro residues; that stretch reads GLPPTMRQPPPLPR. Residues 132-147 are compositionally biased toward low complexity; that stretch reads KPASTQSSAQNSAQSS. A compositionally biased stretch (basic and acidic residues) spans 153–166; it reads KFKDKPPPPPEKHS. 2 stretches are compositionally biased toward low complexity: residues 328-347 and 396-405; these read AQAQ…SNSQ and STGNAVANSG. Basic and acidic residues predominate over residues 485–500; that stretch reads SREELRMRRRSSHDET. Spectrin repeat units follow at residues 541-643, 650-747, 754-883, and 890-990; these read QRFE…KQLH, QSFD…NRLE, NALL…HRLD, and RQFQ…KVLC. Residues 827–851 are disordered; the sequence is VSDTSDTEANHDSDSRYMSAEEQSR. Residues 994–1024 are disordered; that stretch reads AQQTHENGDDGRTTSNSGTIGPLPNLGQSVK. A WW domain is found at 1021 to 1054; it reads QSVKPPWERATTAANVPYYIDHERETTHWDHPEM. The ZZ-type zinc-finger motif lies at 1279 to 1335; sequence KHQAKCNICKEYPIVGFRYRCLKCFNFDMCQKCFFFGRNAKNHKLTHPMHEYCTTTT. 8 residues coordinate Zn(2+): Cys1284, Cys1287, Cys1299, Cys1302, Cys1308, Cys1311, His1321, and His1325. Ser1379 is subject to Phosphoserine. Disordered regions lie at residues 1488–1516 and 1559–1669; these read EQSG…GEQG and DEPN…ELQK. Composition is skewed to polar residues over residues 1497-1509 and 1580-1611; these read NGMQ…MTGL and ALNS…QQNG. A compositionally biased stretch (acidic residues) spans 1630–1641; it reads QELESINDDLED. Low complexity predominate over residues 1642 to 1660; sequence SSSSNTTNTTTTTTTTATT.

Component of the dystrophin associated protein complex (DAPC). Interacts with Dg, via the Dg WW domain binding sites. As to expression, expressed in neuronally derived tissues, mainly the CNS and the brain of stage 16 embryos. Lower level expression is seen in the sensory organs. Expression is absent from the musculature. In larvae, expression is predominant throughout the neuropil and brain and in the eye antennal disks.

The protein localises to the cell membrane. Its subcellular location is the sarcolemma. It is found in the cytoplasm. It localises to the cytoskeleton. Functionally, required for the maintenance of appropriate synaptic retrograde communication and the stabilization of muscle cell architecture or physiology. May play a role in anchoring the cytoskeleton to the plasma membrane. The chain is Dystrophin, isoform B (Dys) from Drosophila melanogaster (Fruit fly).